Here is an 888-residue protein sequence, read N- to C-terminus: Protein translocase subunit SecA (888 aa).

Residues Gln-81, 99 to 103, and Asp-489 each bind ATP; that span reads GEGKT.

This sequence belongs to the SecA family.

The protein resides in the plastid. Its subcellular location is the chloroplast stroma. The protein localises to the chloroplast thylakoid membrane. The catalysed reaction is ATP + H2O + cellular proteinSide 1 = ADP + phosphate + cellular proteinSide 2.. In terms of biological role, has a central role in coupling the hydrolysis of ATP to the transfer of proteins across the thylakoid membrane. The protein is Protein translocase subunit SecA of Trieres chinensis (Marine centric diatom).